The chain runs to 65 residues: MNQGRIWTVVSPTVGLPLLLGSVAAIAFAVHFAVLENTSWVAAFMNGKSVAAAPAPAAPAAPAKK.

At 1-11 (MNQGRIWTVVS) the chain is on the cytoplasmic side. The chain crosses the membrane as a helical span at residues 12–35 (PTVGLPLLLGSVAAIAFAVHFAVL). His-31 lines the a bacteriochlorophyll pocket. Over 36–65 (ENTSWVAAFMNGKSVAAAPAPAAPAAPAKK) the chain is Periplasmic.

The protein belongs to the antenna complex alpha subunit family. The core complex is formed by different alpha and beta chains, binding bacteriochlorophyll molecules, and arranged most probably in tetrameric structures disposed around the reaction center. The non-pigmented gamma chains may constitute additional components.

It is found in the cell inner membrane. Its function is as follows. Antenna complexes are light-harvesting systems, which transfer the excitation energy to the reaction centers. The chain is Light-harvesting protein B-800-850 alpha chain C (pucAC) from Rhodopseudomonas palustris.